Reading from the N-terminus, the 306-residue chain is Pyridoxal 5'-phosphate synthase subunit PdxS (306 aa).

Position 36 (aspartate 36) interacts with D-ribose 5-phosphate. Lysine 93 serves as the catalytic Schiff-base intermediate with D-ribose 5-phosphate. Glycine 165 is a D-ribose 5-phosphate binding site. D-glyceraldehyde 3-phosphate is bound at residue arginine 177. D-ribose 5-phosphate contacts are provided by residues glycine 226 and 247-248; that span reads GS.

The protein belongs to the PdxS/SNZ family. As to quaternary structure, in the presence of PdxT, forms a dodecamer of heterodimers.

The catalysed reaction is aldehydo-D-ribose 5-phosphate + D-glyceraldehyde 3-phosphate + L-glutamine = pyridoxal 5'-phosphate + L-glutamate + phosphate + 3 H2O + H(+). Its pathway is cofactor biosynthesis; pyridoxal 5'-phosphate biosynthesis. In terms of biological role, catalyzes the formation of pyridoxal 5'-phosphate from ribose 5-phosphate (RBP), glyceraldehyde 3-phosphate (G3P) and ammonia. The ammonia is provided by the PdxT subunit. Can also use ribulose 5-phosphate and dihydroxyacetone phosphate as substrates, resulting from enzyme-catalyzed isomerization of RBP and G3P, respectively. This chain is Pyridoxal 5'-phosphate synthase subunit PdxS, found in Salinispora arenicola (strain CNS-205).